A 53-amino-acid polypeptide reads, in one-letter code: UPF0391 membrane protein Acid_3618 (53 aa).

Helical transmembrane passes span 6 to 26 (LVFL…LAGA) and 28 to 48 (VGIA…AFLM).

Belongs to the UPF0391 family.

It localises to the cell membrane. The sequence is that of UPF0391 membrane protein Acid_3618 from Solibacter usitatus (strain Ellin6076).